The chain runs to 501 residues: 2,3-bisphosphoglycerate-independent phosphoglycerate mutase (501 aa).

Mn(2+)-binding residues include D12 and S62. Residue S62 is the Phosphoserine intermediate of the active site. Substrate is bound by residues H121, 150 to 151 (RD), R182, R188, 253 to 256 (RSDR), and K322. The Mn(2+) site is built by D389, H393, D430, H431, and H449.

This sequence belongs to the BPG-independent phosphoglycerate mutase family. In terms of assembly, monomer. The cofactor is Mn(2+).

The catalysed reaction is (2R)-2-phosphoglycerate = (2R)-3-phosphoglycerate. It participates in carbohydrate degradation; glycolysis; pyruvate from D-glyceraldehyde 3-phosphate: step 3/5. In terms of biological role, catalyzes the interconversion of 2-phosphoglycerate and 3-phosphoglycerate. This Ehrlichia ruminantium (strain Welgevonden) protein is 2,3-bisphosphoglycerate-independent phosphoglycerate mutase.